The sequence spans 168 residues: Pathogenesis-related protein 1C (168 aa).

Residues M1–A30 form the signal peptide. The SCP domain occupies L38–Y156.

It belongs to the CRISP family. Post-translationally, three disulfide bonds are present.

It is found in the vacuole. Probably involved in the defense reaction of plants against pathogens. This is Pathogenesis-related protein 1C from Nicotiana tabacum (Common tobacco).